The sequence spans 483 residues: Argininosuccinate lyase (483 aa).

Belongs to the lyase 1 family. Argininosuccinate lyase subfamily.

The protein localises to the cytoplasm. It catalyses the reaction 2-(N(omega)-L-arginino)succinate = fumarate + L-arginine. The protein operates within amino-acid biosynthesis; L-arginine biosynthesis; L-arginine from L-ornithine and carbamoyl phosphate: step 3/3. The protein is Argininosuccinate lyase of Albidiferax ferrireducens (strain ATCC BAA-621 / DSM 15236 / T118) (Rhodoferax ferrireducens).